The following is a 256-amino-acid chain: Probable cyclic nucleotide phosphodiesterase Fisuc_1441/FSU_1912 (256 aa).

7 residues coordinate Fe cation: D20, H22, D59, N89, H156, H196, and H198. AMP is bound by residues H22, D59, and 89 to 90; that span reads NH. H198 serves as a coordination point for AMP.

This sequence belongs to the cyclic nucleotide phosphodiesterase class-III family. Requires Fe(2+) as cofactor.

In Fibrobacter succinogenes (strain ATCC 19169 / S85), this protein is Probable cyclic nucleotide phosphodiesterase Fisuc_1441/FSU_1912.